The sequence spans 429 residues: Enolase (429 aa).

Residue Gln164 participates in (2R)-2-phosphoglycerate binding. The active-site Proton donor is the Glu206. Residues Asp243, Glu286, and Asp313 each coordinate Mg(2+). (2R)-2-phosphoglycerate-binding residues include Lys338, Arg367, Ser368, and Lys389. The Proton acceptor role is filled by Lys338.

This sequence belongs to the enolase family. Mg(2+) is required as a cofactor.

Its subcellular location is the cytoplasm. It is found in the secreted. The protein localises to the cell surface. It catalyses the reaction (2R)-2-phosphoglycerate = phosphoenolpyruvate + H2O. It functions in the pathway carbohydrate degradation; glycolysis; pyruvate from D-glyceraldehyde 3-phosphate: step 4/5. Its function is as follows. Catalyzes the reversible conversion of 2-phosphoglycerate (2-PG) into phosphoenolpyruvate (PEP). It is essential for the degradation of carbohydrates via glycolysis. This Thermosipho africanus (strain TCF52B) protein is Enolase.